The chain runs to 316 residues: MSIKEELMEIIEAIKYTSEKPEEIVHGKGPRIIVKESRIIDVQGDEGIILEGKEEDGKIKAKIIVKKGYKFKYPIHMCFGITEENISQIIDVEIILEEDSSISLMSHCSFPKGKGIKHIMNGIIKIGKNAKFSYNEFHYHGMDGDILVKPTVKVEIDEGGIYISNFTLTKGRIGTLDIEQEIIAKKDAIIDITTRTYAIKEDVVKVNEVVKLNGENAKCIIKSRGAAMDNSKISLKLKIEGNAPYSKGHIDCAEIVKGNAEVESIPIVVVRDDKARITHEAAIGSVDKKQLETLMAKGLDEDEATEIIVKGMIGDL.

It belongs to the iron-sulfur cluster assembly SufBD family.

The sequence is that of Iron-sulfur cluster assembly SufBD family protein MJ0034 from Methanocaldococcus jannaschii (strain ATCC 43067 / DSM 2661 / JAL-1 / JCM 10045 / NBRC 100440) (Methanococcus jannaschii).